Consider the following 234-residue polypeptide: L-cystine transport system permease protein TcyB (234 aa).

5 helical membrane-spanning segments follow: residues 8 to 28, 36 to 56, 78 to 98, 100 to 120, and 199 to 219; these read ALTL…WPIL, IPLT…TALA, TPLL…NVTL, PFPS…SEII, and ILVI…LLSL. In terms of domain architecture, ABC transmembrane type-1 spans 32 to 221; that stretch reads IYYTIPLTIL…IICFLLSLVQ (190 aa).

It belongs to the binding-protein-dependent transport system permease family. The complex is composed of two ATP-binding proteins (TcyC), two transmembrane proteins (TcyB) and a solute-binding protein (TcyA).

The protein localises to the cell membrane. Its function is as follows. Part of the ABC transporter complex TcyABC involved in L-cystine import. Probably responsible for the translocation of the substrate across the membrane. The polypeptide is L-cystine transport system permease protein TcyB (tcyB) (Bacillus subtilis (strain 168)).